Consider the following 470-residue polypeptide: Velvet complex subunit B (470 aa).

Disordered stretches follow at residues 1–148 and 223–321; these read MNSS…EEGT and VRSS…NPLF. Positions 15–37 are enriched in low complexity; the sequence is PGPGYSSSVPPPIHAYQQQQQHQ. Residues 38-49 are compositionally biased toward pro residues; that stretch reads HPPPSLLPPPPT. Residues 74–86 are compositionally biased toward basic residues; sequence HQHHAPPPPHHHS. A compositionally biased stretch (pro residues) spans 102 to 124; the sequence is NQYPRPHPLPPSRNDEPPPPSSE. One can recognise a Velvet domain in the interval 147-452; sequence GTGLKYSLDV…ALQGIKIPIR (306 aa). Residues 232–241 are compositionally biased toward low complexity; the sequence is GASSNNYSYS. The span at 242-255 shows a compositional bias: polar residues; that stretch reads TLEPSTPSYQQQAL. Positions 280–301 are enriched in low complexity; the sequence is QQGYGQAPSYQSSSSYGPPQQY. Positions 307–318 are enriched in polar residues; that stretch reads GYNTDPPASSAN.

The protein belongs to the velvet family. VelB subfamily. As to quaternary structure, component of the heterotrimeric velvet complex composed of laeA, veA and velB; VeA acting as a bridging protein between laeA and velB. Forms a heterodimeric complex with vosA; the formation of the velB-vosA complex is light-dependent.

The protein localises to the nucleus. The protein resides in the cytoplasm. Component of the velvet transcription factor complex that controls sexual/asexual developmental ratio in response to light, promoting sexual development in the darkness while stimulating asexual sporulation under illumination. The velvet complex acts as a global regulator for secondary metabolite gene expression. Component of the velB-VosA heterodimeric complex that plays a dual role in activating genes associated with spore maturation and repressing certain development-associated genes. The complex binds DNA through the DNA-binding domain of vosA that recognizes an 11-nucleotide consensus sequence 5'-CTGGCCGCGGC-3' consisting of two motifs in the promoters of key developmental regulatory genes. Controls the expression of the pink pigment aurofusarin and the mycotoxin deoxynivalenol gene clusters. Regulates hyphae formation, hyphal hydrophobicity and conidiation. Regulates of cell wall integrity and pathogenicity. The chain is Velvet complex subunit B from Gibberella zeae (strain ATCC MYA-4620 / CBS 123657 / FGSC 9075 / NRRL 31084 / PH-1) (Wheat head blight fungus).